The sequence spans 474 residues: Cyclin-dependent kinase 2 homolog (474 aa).

The Protein kinase domain maps to 7-446; sequence YRHVVKLGEG…AAEAVHHPYL (440 aa). ATP is bound by residues 13–21 and Lys36; that span reads LGEGTYGMV. A Phosphothreonine modification is found at Thr17. Tyr18 bears the Phosphotyrosine mark. Asp131 functions as the Proton acceptor in the catalytic mechanism. Positions 150–200 are disordered; sequence TALPSSPQQSMRVPHAGGTNGEAGRASANGNEHAPRPTAAEGSVSPWEEAA. Ser230 bears the Phosphoserine mark. A compositionally biased stretch (low complexity) spans 334–354; sequence QQLQAQQQQPQQGSSPSHSSS. A disordered region spans residues 334 to 356; sequence QQLQAQQQQPQQGSSPSHSSSRA.

The protein belongs to the protein kinase superfamily. CMGC Ser/Thr protein kinase family. CDC2/CDKX subfamily. May form a complex composed of at least the catalytic subunit CRK2 and a cyclin. Mg(2+) is required as a cofactor.

The protein resides in the cytoplasm. It carries out the reaction L-seryl-[protein] + ATP = O-phospho-L-seryl-[protein] + ADP + H(+). It catalyses the reaction L-threonyl-[protein] + ATP = O-phospho-L-threonyl-[protein] + ADP + H(+). The catalysed reaction is [DNA-directed RNA polymerase] + ATP = phospho-[DNA-directed RNA polymerase] + ADP + H(+). Its activity is regulated as follows. Phosphorylation at Thr-17 or Tyr-18 inactivates the enzyme, while phosphorylation at Ser-230 activates it. Serine/threonine-protein kinase. Involved in the control of the cell cycle. Required for entry into S-phase and mitosis. Probable component of the kinase complex that phosphorylates the repetitive C-terminus of RNA polymerase II. The protein is Cyclin-dependent kinase 2 homolog of Crithidia fasciculata.